A 367-amino-acid chain; its full sequence is tRNA 2-selenouridine synthase (367 aa).

The region spanning Phe14–Glu137 is the Rhodanese domain. Cys97 serves as the catalytic S-selanylcysteine intermediate.

Belongs to the SelU family. As to quaternary structure, monomer.

It carries out the reaction 5-methylaminomethyl-2-thiouridine(34) in tRNA + selenophosphate + (2E)-geranyl diphosphate + H2O + H(+) = 5-methylaminomethyl-2-selenouridine(34) in tRNA + (2E)-thiogeraniol + phosphate + diphosphate. It catalyses the reaction 5-methylaminomethyl-2-thiouridine(34) in tRNA + (2E)-geranyl diphosphate = 5-methylaminomethyl-S-(2E)-geranyl-thiouridine(34) in tRNA + diphosphate. The enzyme catalyses 5-methylaminomethyl-S-(2E)-geranyl-thiouridine(34) in tRNA + selenophosphate + H(+) = 5-methylaminomethyl-2-(Se-phospho)selenouridine(34) in tRNA + (2E)-thiogeraniol. The catalysed reaction is 5-methylaminomethyl-2-(Se-phospho)selenouridine(34) in tRNA + H2O = 5-methylaminomethyl-2-selenouridine(34) in tRNA + phosphate. Functionally, involved in the post-transcriptional modification of the uridine at the wobble position (U34) of tRNA(Lys), tRNA(Glu) and tRNA(Gln). Catalyzes the conversion of 2-thiouridine (S2U-RNA) to 2-selenouridine (Se2U-RNA). Acts in a two-step process involving geranylation of 2-thiouridine (S2U) to S-geranyl-2-thiouridine (geS2U) and subsequent selenation of the latter derivative to 2-selenouridine (Se2U) in the tRNA chain. This chain is tRNA 2-selenouridine synthase, found in Marinobacter nauticus (strain ATCC 700491 / DSM 11845 / VT8) (Marinobacter aquaeolei).